The chain runs to 226 residues: Enolase-phosphatase E1 (226 aa).

The protein belongs to the HAD-like hydrolase superfamily. MasA/MtnC family. As to quaternary structure, monomer. The cofactor is Mg(2+).

It catalyses the reaction 5-methylsulfanyl-2,3-dioxopentyl phosphate + H2O = 1,2-dihydroxy-5-(methylsulfanyl)pent-1-en-3-one + phosphate. It participates in amino-acid biosynthesis; L-methionine biosynthesis via salvage pathway; L-methionine from S-methyl-5-thio-alpha-D-ribose 1-phosphate: step 3/6. It functions in the pathway amino-acid biosynthesis; L-methionine biosynthesis via salvage pathway; L-methionine from S-methyl-5-thio-alpha-D-ribose 1-phosphate: step 4/6. Functionally, bifunctional enzyme that catalyzes the enolization of 2,3-diketo-5-methylthiopentyl-1-phosphate (DK-MTP-1-P) into the intermediate 2-hydroxy-3-keto-5-methylthiopentenyl-1-phosphate (HK-MTPenyl-1-P), which is then dephosphorylated to form the acireductone 1,2-dihydroxy-3-keto-5-methylthiopentene (DHK-MTPene). The polypeptide is Enolase-phosphatase E1 (Shewanella oneidensis (strain ATCC 700550 / JCM 31522 / CIP 106686 / LMG 19005 / NCIMB 14063 / MR-1)).